Reading from the N-terminus, the 100-residue chain is NADH-quinone oxidoreductase subunit K (100 aa).

Transmembrane regions (helical) follow at residues 4-24 (LSYS…GIMI), 29-49 (LFLL…FVIV), and 60-80 (VMYI…LALL).

The protein belongs to the complex I subunit 4L family. As to quaternary structure, NDH-1 is composed of 14 different subunits. Subunits NuoA, H, J, K, L, M, N constitute the membrane sector of the complex.

Its subcellular location is the cell membrane. The catalysed reaction is a quinone + NADH + 5 H(+)(in) = a quinol + NAD(+) + 4 H(+)(out). NDH-1 shuttles electrons from NADH, via FMN and iron-sulfur (Fe-S) centers, to quinones in the respiratory chain. The immediate electron acceptor for the enzyme in this species is believed to be ubiquinone. Couples the redox reaction to proton translocation (for every two electrons transferred, four hydrogen ions are translocated across the cytoplasmic membrane), and thus conserves the redox energy in a proton gradient. This Baumannia cicadellinicola subsp. Homalodisca coagulata protein is NADH-quinone oxidoreductase subunit K.